A 482-amino-acid polypeptide reads, in one-letter code: QWRF motif-containing protein 3 (482 aa).

Residues 1–20 (MKSCEHELLKTRRGKSREVS) show a composition bias toward basic and acidic residues. Disordered stretches follow at residues 1 to 60 (MKSC…GLKK) and 171 to 220 (TAKP…QWAL). Over residues 21 to 42 (SRFLSSPSASSSPNRRNSTSNS) the composition is skewed to low complexity. The span at 191 to 219 (RTNSSKGIENRLQRNNSVSRYGSSMSQWA) shows a compositional bias: polar residues. The QWRF motif signature appears at 292-295 (QWRF).

Belongs to the QWRF family.

This is QWRF motif-containing protein 3 (QWRF3) from Arabidopsis thaliana (Mouse-ear cress).